Consider the following 311-residue polypeptide: Homoserine kinase (311 aa).

96-106 (PLARGLGSSAA) is a binding site for ATP.

Belongs to the GHMP kinase family. Homoserine kinase subfamily.

The protein localises to the cytoplasm. The enzyme catalyses L-homoserine + ATP = O-phospho-L-homoserine + ADP + H(+). It functions in the pathway amino-acid biosynthesis; L-threonine biosynthesis; L-threonine from L-aspartate: step 4/5. Functionally, catalyzes the ATP-dependent phosphorylation of L-homoserine to L-homoserine phosphate. The polypeptide is Homoserine kinase (Natranaerobius thermophilus (strain ATCC BAA-1301 / DSM 18059 / JW/NM-WN-LF)).